The primary structure comprises 545 residues: Thermosome subunit beta (545 aa).

This sequence belongs to the TCP-1 chaperonin family. As to quaternary structure, forms a Heterooligomeric complex of two stacked eight-membered rings.

Functionally, molecular chaperone; binds unfolded polypeptides in vitro, and has a weak ATPase activity. This is Thermosome subunit beta (thsB) from Thermococcus sp. (strain KS-8).